Here is a 736-residue protein sequence, read N- to C-terminus: Elongation factor 2 (736 aa).

The 217-residue stretch at 18–234 (TRVRNIGIIA…VIDAYTASDK (217 aa)) folds into the tr-type G domain. GTP is bound by residues 27 to 34 (AHVDHGKT), 93 to 97 (DTPGH), and 147 to 150 (NKVD). His-603 is subject to Diphthamide.

This sequence belongs to the TRAFAC class translation factor GTPase superfamily. Classic translation factor GTPase family. EF-G/EF-2 subfamily.

The protein resides in the cytoplasm. Catalyzes the GTP-dependent ribosomal translocation step during translation elongation. During this step, the ribosome changes from the pre-translocational (PRE) to the post-translocational (POST) state as the newly formed A-site-bound peptidyl-tRNA and P-site-bound deacylated tRNA move to the P and E sites, respectively. Catalyzes the coordinated movement of the two tRNA molecules, the mRNA and conformational changes in the ribosome. This is Elongation factor 2 (fusA) from Saccharolobus solfataricus (strain ATCC 35092 / DSM 1617 / JCM 11322 / P2) (Sulfolobus solfataricus).